The chain runs to 646 residues: MEGVLVVLLSLVLVVLSVLILAVARLVRATRVDKVPDPAPVVPRTPAARGVGDVTGPADFDEEPTVRVLPAPWEGSGAPATTDADSPADRDGTAARTGDSAVTAGRSDGGLRAAHGGSAEEAAQIVARAEREAAERLARAERDAAEIRRRGEEDVALLRERMLAEAAVETSRVQAAARESVRAEQEAARTEIAATRAAFDGEQQAWRTELQSREVAIAAREQRVEDRMASLDDHGRRLADRDRDLLDRENDLTRRTAEVADLERARHAALEQVAGLTAGQARGELIAVIEQEARREAALTVREIEARAEEEGEERARRIVTTAIQRVASDQTTESVVTVLHLPGDEMKGRIIGREGRNIRAFESVTGVNVLIDDTPEAVLLSCFDPVRREVGRITLAALVSDGRIHPHRIEEEYARAQLEVAERCVRAGEDALLETGISEMHPELVNLLGQLRYRTSYGQNVLAHLIESAHLAGIMAAELRMPLPLAKRAALLHDLGKALTHEIEGSHALIGADVARRYGEDEQVVHAIEAHHNEVAPRSICAVLTQAADQISGGRPGARRDSLESYVKRLERIEQIAGDRPGVDKVFAMQAGREVRVMVVPEEIDDLAAHLLARDVARQIEEELTYPGQIRVTVVRETRAVGTAR.

Residues 4–24 form a helical membrane-spanning segment; that stretch reads VLVVLLSLVLVVLSVLILAVA. 2 disordered regions span residues 43-62 and 69-118; these read PRTP…DFDE and LPAP…HGGS. A KH domain is found at 336-402; the sequence is VVTVLHLPGD…RITLAALVSD (67 aa). The HD domain maps to 462–555; it reads VLAHLIESAH…TQAADQISGG (94 aa).

Belongs to the RNase Y family.

The protein resides in the cell membrane. Endoribonuclease that initiates mRNA decay. In Frankia casuarinae (strain DSM 45818 / CECT 9043 / HFP020203 / CcI3), this protein is Ribonuclease Y.